We begin with the raw amino-acid sequence, 346 residues long: O-methyltransferase atr3 (346 aa).

Disordered regions lie at residues 1–22 (MTSV…DDLM) and 52–88 (GLKS…WYHA). S-adenosyl-L-methionine contacts are provided by residues 190 to 191 (DL) and 217 to 218 (DI).

Belongs to the class I-like SAM-binding methyltransferase superfamily. As to quaternary structure, homodimer.

It carries out the reaction 4-O-demethylbarbatate + S-adenosyl-L-methionine = proatranorin I + S-adenosyl-L-homocysteine. It functions in the pathway secondary metabolite biosynthesis; terpenoid biosynthesis. Functionally, O-methyltransferase; part of the gene cluster that mediates the biosynthesis of atranorin, a depside of polyketide origin that accumulates in the cortical or medullary layers of lichen thalli. Atr3 methylates the carboxyl group of 4-O-demethylbarbatic acid to yield proatranorin I. Atr3 is also able to methylate the atr2 product proatranorin III to produce the final compound atranorin. The first step in the pathway is performed by the non-reducing polyketide synthase atr1 that produces 4-O-demethylbarbatic acid composed of two 3-methylorsellinic acid (3MOA) moieties. The pathway continues with the actions of the cytochrome P450 monooygenase atr2 that catalizes the oxidation of c-9 and the O-methyltransferase atr3 that performs the methylation of the carboxyl group to yield atranorin, via the proatranorin II and III intermediates if atr2 acts first, or the proatranorin I intermediate if atr3 acts first. The sequence is that of O-methyltransferase atr3 from Stereocaulon alpinum (Alpine snow lichen).